A 504-amino-acid polypeptide reads, in one-letter code: Ribosomal protein uS12 methylthiotransferase RimO (504 aa).

An MTTase N-terminal domain is found at 19–135 (KKVGFVSLGC…ILAASGIEPR (117 aa)). Positions 28, 64, 98, 214, 218, and 221 each coordinate [4Fe-4S] cluster. The 231-residue stretch at 200–430 (ATPKYMAYIK…MSLQKQISKK (231 aa)) folds into the Radical SAM core domain. In terms of domain architecture, TRAM spans 433 to 504 (KALIGREFDV…HDYDLVARLL (72 aa)).

This sequence belongs to the methylthiotransferase family. RimO subfamily. [4Fe-4S] cluster is required as a cofactor.

Its subcellular location is the cytoplasm. It catalyses the reaction L-aspartate(89)-[ribosomal protein uS12]-hydrogen + (sulfur carrier)-SH + AH2 + 2 S-adenosyl-L-methionine = 3-methylsulfanyl-L-aspartate(89)-[ribosomal protein uS12]-hydrogen + (sulfur carrier)-H + 5'-deoxyadenosine + L-methionine + A + S-adenosyl-L-homocysteine + 2 H(+). Catalyzes the methylthiolation of an aspartic acid residue of ribosomal protein uS12. The chain is Ribosomal protein uS12 methylthiotransferase RimO from Koribacter versatilis (strain Ellin345).